The following is a 449-amino-acid chain: Putative F-box/FBD/LRR-repeat protein At3g49480 (449 aa).

Residues 11–59 (EDRISSLPDDLLVKILLCVPTKDAAATTFLSKRWRFVWRMLPRLNYIET) enclose the F-box domain. 6 LRR repeats span residues 60–91 (TSDVKSNTVWWFLEESFRFHKAPLLERLWIDL), 153–180 (RLTLSDKILVDVPCQVSLPSLRELDLFC), 182–206 (VYKDEDSHVKLLSSCPVLKHLKVTR), 235–260 (FREDSDMSDPFLVTDTPNLLSLHIFD), 275–302 (VTVVTDELFPSEKFMRPLSSVKYLALSP), and 327–352 (SEYDLLESLLVLLSKCSKLKVFLVDS). In terms of domain architecture, FBD spans 364–412 (WNQPSSIPRCLSSHLEIFEWDGYVGREDEKKIIRYILENSKYLKTAGIS).

This is Putative F-box/FBD/LRR-repeat protein At3g49480 from Arabidopsis thaliana (Mouse-ear cress).